The chain runs to 370 residues: TD and POZ domain-containing protein 4 (370 aa).

The region spanning 19–149 (KLCYRWTISN…DDKFTLLCKV (131 aa)) is the MATH domain. Positions 188–251 (TDCSLLVAGH…MMGFIYTGKV (64 aa)) constitute a BTB domain.

Belongs to the Tdpoz family.

The chain is TD and POZ domain-containing protein 4 from Mus musculus (Mouse).